Consider the following 740-residue polypeptide: Copalyl diphosphate synthase 2 (740 aa).

Lys-154 provides a ligand contact to substrate. Residues Asp-287 and Asp-289 each contribute to the Mg(2+) site. Residues 287–290 (DADD) carry the DXDD motif motif. Lys-373 provides a ligand contact to substrate.

This sequence belongs to the terpene synthase family. It depends on Mg(2+) as a cofactor.

The catalysed reaction is (2E,6E,10E)-geranylgeranyl diphosphate = (+)-copalyl diphosphate. It functions in the pathway secondary metabolite biosynthesis; terpenoid biosynthesis. Monofunctional diterpene synthase converting geranylgeranyl diphosphate to copalyl diphosphate. The polypeptide is Copalyl diphosphate synthase 2 (CPS2) (Selaginella moellendorffii (Spikemoss)).